The following is a 295-amino-acid chain: ATP synthase gamma chain (295 aa).

It belongs to the ATPase gamma chain family. F-type ATPases have 2 components, CF(1) - the catalytic core - and CF(0) - the membrane proton channel. CF(1) has five subunits: alpha(3), beta(3), gamma(1), delta(1), epsilon(1). CF(0) has three main subunits: a, b and c.

The protein localises to the cell inner membrane. Produces ATP from ADP in the presence of a proton gradient across the membrane. The gamma chain is believed to be important in regulating ATPase activity and the flow of protons through the CF(0) complex. The polypeptide is ATP synthase gamma chain (Campylobacter curvus (strain 525.92)).